An 89-amino-acid chain; its full sequence is Small ribosomal subunit protein uS15 (89 aa).

The interval 1–23 (MTLNTEAKQKIINKHQTHGTDTG) is disordered.

This sequence belongs to the universal ribosomal protein uS15 family. As to quaternary structure, part of the 30S ribosomal subunit. Forms a bridge to the 50S subunit in the 70S ribosome, contacting the 23S rRNA.

One of the primary rRNA binding proteins, it binds directly to 16S rRNA where it helps nucleate assembly of the platform of the 30S subunit by binding and bridging several RNA helices of the 16S rRNA. Functionally, forms an intersubunit bridge (bridge B4) with the 23S rRNA of the 50S subunit in the ribosome. This is Small ribosomal subunit protein uS15 from Prochlorococcus marinus (strain SARG / CCMP1375 / SS120).